We begin with the raw amino-acid sequence, 393 residues long: Squamosa promoter-binding-like protein 17 (393 aa).

Residues 40 to 49 show a composition bias toward low complexity; it reads AAAVESSSTS. The disordered stretch occupies residues 40 to 67; it reads AAAVESSSTSSGGGGKKGKGVAAAAAPP. The SBP-type zinc-finger motif lies at 71–148; that stretch reads PPRCQVEGCG…AGHNERRRKP (78 aa). Residues Cys-74, Cys-79, Cys-96, His-99, Cys-115, Cys-118, His-122, and Cys-134 each contribute to the Zn(2+) site. Residues 131–147 carry the Bipartite nuclear localization signal motif; it reads KKSCRRRLAGHNERRRK. Over residues 137 to 148 the composition is skewed to basic residues; sequence RLAGHNERRRKP. Disordered stretches follow at residues 137–158, 273–301, and 317–393; these read RLAG…SRYG, WDTT…GNNP, and GWNS…NWSL. Composition is skewed to polar residues over residues 273–293 and 380–393; these read WDTT…STAS and GAFS…NWSL.

Expressed in young panicles.

Its subcellular location is the nucleus. Its function is as follows. Trans-acting factor that binds specifically to the consensus nucleotide sequence 5'-TNCGTACAA-3'. May be involved in panicle development. The sequence is that of Squamosa promoter-binding-like protein 17 (SPL17) from Oryza sativa subsp. japonica (Rice).